The primary structure comprises 128 residues: 14.7 kDa protein (128 aa).

The C4-type zinc finger occupies 65–94 (CFDCGAYLYDDHVCKRFTSRSNSDCLSVIH).

Functionally, may act as a regulatory factor during viral transcription. This is 14.7 kDa protein from Shallot virus X (ShVX).